A 408-amino-acid polypeptide reads, in one-letter code: Secreted effector protein SseJ (408 aa).

Serine 151 acts as the Nucleophile in catalysis. Catalysis depends on residues aspartate 381 and histidine 384.

The protein belongs to the 'GDSL' lipolytic enzyme family. Interacts with RhoA and indirectly with SifA.

It is found in the secreted. Its subcellular location is the host cytoplasm. In terms of biological role, effector proteins function to alter host cell physiology and promote bacterial survival in host tissues. This protein is required for endosomal tubulation and negatively regulates the formation of Salmonella-induced filaments (Sifs) in epithelial cells. Has both deacylase and esterification activities in vitro, but esterification is probably the dominant activity in host cells. Significantly contributes to cholesterol esterification, which reduces cellular cholesterol in cells and abrogates the ability of SifA to associate with cholesterol and LAMP-1 vesicles. The polypeptide is Secreted effector protein SseJ (sseJ) (Salmonella typhimurium (strain LT2 / SGSC1412 / ATCC 700720)).